The sequence spans 235 residues: tRNA pseudouridine synthase B (235 aa).

The active-site Nucleophile is the Asp-45.

It belongs to the pseudouridine synthase TruB family. Type 1 subfamily.

The catalysed reaction is uridine(55) in tRNA = pseudouridine(55) in tRNA. In terms of biological role, responsible for synthesis of pseudouridine from uracil-55 in the psi GC loop of transfer RNAs. The sequence is that of tRNA pseudouridine synthase B from Chlamydia felis (strain Fe/C-56) (Chlamydophila felis).